A 252-amino-acid polypeptide reads, in one-letter code: Imidazole glycerol phosphate synthase subunit HisF (252 aa).

Residues D11 and D130 contribute to the active site.

Belongs to the HisA/HisF family. Heterodimer of HisH and HisF.

It localises to the cytoplasm. It carries out the reaction 5-[(5-phospho-1-deoxy-D-ribulos-1-ylimino)methylamino]-1-(5-phospho-beta-D-ribosyl)imidazole-4-carboxamide + L-glutamine = D-erythro-1-(imidazol-4-yl)glycerol 3-phosphate + 5-amino-1-(5-phospho-beta-D-ribosyl)imidazole-4-carboxamide + L-glutamate + H(+). Its pathway is amino-acid biosynthesis; L-histidine biosynthesis; L-histidine from 5-phospho-alpha-D-ribose 1-diphosphate: step 5/9. Functionally, IGPS catalyzes the conversion of PRFAR and glutamine to IGP, AICAR and glutamate. The HisF subunit catalyzes the cyclization activity that produces IGP and AICAR from PRFAR using the ammonia provided by the HisH subunit. This Staphylococcus aureus (strain bovine RF122 / ET3-1) protein is Imidazole glycerol phosphate synthase subunit HisF.